A 141-amino-acid chain; its full sequence is Large ribosomal subunit protein uL11 (141 aa).

This sequence belongs to the universal ribosomal protein uL11 family. In terms of assembly, part of the ribosomal stalk of the 50S ribosomal subunit. Interacts with L10 and the large rRNA to form the base of the stalk. L10 forms an elongated spine to which L12 dimers bind in a sequential fashion forming a multimeric L10(L12)X complex. In terms of processing, one or more lysine residues are methylated.

Forms part of the ribosomal stalk which helps the ribosome interact with GTP-bound translation factors. The sequence is that of Large ribosomal subunit protein uL11 from Streptococcus equi subsp. equi (strain 4047).